The chain runs to 66 residues: Toxin Cll1 (66 aa).

The 66-residue stretch at 1 to 66 (KEGYLVNKST…TYPLPNKSCS (66 aa)) folds into the LCN-type CS-alpha/beta domain. 4 disulfides stabilise this stretch: Cys12–Cys65, Cys16–Cys41, Cys25–Cys46, and Cys29–Cys48.

Belongs to the long (4 C-C) scorpion toxin superfamily. Sodium channel inhibitor family. Beta subfamily. In terms of tissue distribution, expressed by the venom gland.

It localises to the secreted. In terms of biological role, beta toxin that binds site-4 of sodium channels (Nav) and reduces peak current (observed on Nav1.1/SCN1A, Nav1.2/SCN2A, Nav1.3/SCN3A, Nav1.4/SCN5A, Nav1.5/SCN4A, and Nav1.6/SCN8A (IC(50)=44.9 nM)), shifts the voltage of activation toward more negative potentials (observed on Nav1.6, Nav1.1 (weak), Nav1.2 (weak), and Nav1.7 (weak)), and induces resurgent currents at negative voltages following brief and strong depolarizations (observed on Nav1.6, Nav1.1 (weak), Nav1.2 (weak), and Nav1.4 (weak)). This toxin is only active on crustaceans. This is Toxin Cll1 from Centruroides limpidus (Mexican scorpion).